Reading from the N-terminus, the 305-residue chain is Transcriptional activator protein PfeR (305 aa).

Residues 79–192 form the Response regulatory domain; sequence RLLLVEDDPR…ELDARTDALL (114 aa). Aspartate 128 carries the 4-aspartylphosphate modification. The ompR/PhoB-type DNA-binding region spans 200 to 301; the sequence is LPLAQRRDTR…VRGQGYLLVE (102 aa).

Post-translationally, phosphorylated by PfeS.

Its subcellular location is the cytoplasm. Its function is as follows. Member of the two-component regulatory system PfeR/PfeS. Activates expression of the ferric enterobactin receptor. The protein is Transcriptional activator protein PfeR (pfeR) of Pseudomonas aeruginosa (strain ATCC 15692 / DSM 22644 / CIP 104116 / JCM 14847 / LMG 12228 / 1C / PRS 101 / PAO1).